The following is a 345-amino-acid chain: S-adenosylmethionine:tRNA ribosyltransferase-isomerase (345 aa).

This sequence belongs to the QueA family. As to quaternary structure, monomer.

Its subcellular location is the cytoplasm. The catalysed reaction is 7-aminomethyl-7-carbaguanosine(34) in tRNA + S-adenosyl-L-methionine = epoxyqueuosine(34) in tRNA + adenine + L-methionine + 2 H(+). It functions in the pathway tRNA modification; tRNA-queuosine biosynthesis. In terms of biological role, transfers and isomerizes the ribose moiety from AdoMet to the 7-aminomethyl group of 7-deazaguanine (preQ1-tRNA) to give epoxyqueuosine (oQ-tRNA). In Shewanella baltica (strain OS185), this protein is S-adenosylmethionine:tRNA ribosyltransferase-isomerase.